The primary structure comprises 3898 residues: Genome polyprotein (3898 aa).

The Peptidase C53 domain maps to 1–168 (MELNHFELLY…TNCPLWVTSC (168 aa)). Residues E22, H49, and C69 each act as for N-terminal protease activity in the active site. Residues 32 to 54 (LFGNPSEVHPQSTLKLPHDRGRG) are disordered. The tract at residues 112-138 (CEVTKRIGRVTGSDGKLYHIYVCVDGC) is zinc-binding TRASH domain. N157 is a glycosylation site (N-linked (GlcNAc...) asparagine; by host). 2 disordered regions span residues 170 to 206 (DDGASGSKDKKPDRMNKGKLKIAPREHEKDSKTKPPD) and 221 to 242 (KGKVKGKNTQDGLYHNKNKPPE). 2 stretches are compositionally biased toward basic and acidic residues: residues 176–185 (SKDKKPDRMN) and 192–204 (APREHEKDSKTKP). N-linked (GlcNAc...) asparagine; by host glycans are attached at residues N269, N274, N278, N293, and N332. Disulfide bonds link C305-C349 and C335-C336. N-linked (GlcNAc...) asparagine; by host glycans are attached at residues N362 and N367. Cystine bridges form between C377/C422 and C381/C405. N-linked (GlcNAc...) asparagine; by host glycans are attached at residues N410, N425, N500, and N594. Cysteines 693 and 737 form a disulfide. Residues N805, N810, N874, N918, N949, and N986 are each glycosylated (N-linked (GlcNAc...) asparagine; by host). The next 9 helical transmembrane spans lie at 1031–1051 (FVVLVVVALLGGRYVLWLIVT), 1070–1090 (VVLIGNLITHTDNEVVVYFLL), 1104–1124 (ILLLFHAMTNNPVKTITVALL), 1140–1164 (QRQPVTSFDIQLALAVVVVVVMLLA), 1189–1209 (FSTDLVIATVSAALLTWTYIS), 1217–1237 (WLQYLVSTVTGIFLIRVLKGI), 1247–1267 (LPSHRPLFYILVYLISTAVVT), 1281–1301 (VPTLLMVFTMWADILTLILIL), and 1360–1380 (TMLPLIKAILISCISNKWQLI). One can recognise a Peptidase C74 domain in the interval 1441-1589 (KELIIKHKVR…DLEHLGWVLR (149 aa)). Catalysis depends on for cysteine protease NS2 activity residues H1447, E1461, and C1512. The helical transmembrane segment at 1568–1588 (MLLVGNLGTEIGDLEHLGWVL) threads the bilayer. In terms of domain architecture, Peptidase S31 spans 1590-1763 (GPAVCKKVTE…LPIFEASSGR (174 aa)). Catalysis depends on charge relay system; for serine protease NS3 activity residues H1658 and D1695. An N-linked (GlcNAc...) asparagine; by host glycan is attached at N1713. S1752 (charge relay system; for serine protease NS3 activity) is an active-site residue. Residues 1802–1960 (ITTMNRGEFR…QKHPIEEFIA (159 aa)) enclose the Helicase ATP-binding domain. An ATP-binding site is contributed by 1815–1822 (LATGAGKT). The short motif at 1910-1913 (DEYH) is the DEAH box element. Residues 1978–2179 (GLKIPVEEMK…ELPMAVKNIM (202 aa)) form the Helicase C-terminal domain. 8 N-linked (GlcNAc...) asparagine; by host glycosylation sites follow: N2134, N2217, N2494, N2787, N2815, N2891, N3211, and N3316. Residues T3500 and L3502 each contribute to the GTP site. Residues 3519–3642 (PVAVSFDTKA…ITERALGEKF (124 aa)) enclose the RdRp catalytic domain. N3689 carries N-linked (GlcNAc...) asparagine; by host glycosylation. Residue R3697 participates in GTP binding. N3698 carries an N-linked (GlcNAc...) asparagine; by host glycan. Position 3705 (K3705) interacts with GTP. The N-linked (GlcNAc...) asparagine; by host glycan is linked to N3794.

It belongs to the pestivirus polyprotein family. As to quaternary structure, interacts (via N-terminus) with host SP1; this interaction induces proteasomal degradation of SP1 with subsequent down-regulation of HDAC1 and ISG15 expression thereby counteracting the host innate immunity. Interacts (via C-terminus) with host IRF3. Interacts with host OS9. In terms of assembly, homodimer; disulfide-linked. Interacts with host RPSA. As to quaternary structure, homodimer; disulfide-linked. Heterodimer with E1; disulfide-linked. Homodimer; disulfide-linked. Heterodimer with E1; disulfide-linked. Interacts with host TRX2. Interacts with host receptor ADAM17 (via metalloproteinase domain); this interaction allows binding and probably entry of the virus into the host cell. Interacts with host ANXA2; this interaction allows binding and probably entry of the virus into the host cell. Interacts with host MERTK; this interaction allows binding and probably entry of the virus into the host cell. In terms of assembly, interacts with host TRAF6; this interaction inhibits host NF-kappa-B pathway. Interacts with NS5B; this interaction enhances RNA-dependent RNA polymerase activity. Interacts with protein NS4A. As to quaternary structure, interacts with host RAB5, this interaction facilitates the formation of NS4B-related complex. Interacts with host FTH1; this interaction plays a positive role in viral anti-apoptosis. Interacts with RNA-directed RNA polymerase. Interacts with host RSAD2; this interaction inhibits viral replication. In terms of assembly, interacts with NS5A; this interaction promotes viral replication. In terms of processing, heavily glycosylated. Post-translationally, the viral RNA of pestiviruses is expressed as a single polyprotein which undergoes post-translational proteolytic processing resulting in the production of at least eleven individual proteins. The N-terminal protease cleaves itself from the nascent polyprotein autocatalytically and thereby generates the N-terminus of the adjacent viral capsid protein C. Cleavage between E2 and p7 is partial.

It is found in the host cytoplasm. Its subcellular location is the virion. The protein resides in the host cell membrane. It localises to the virion membrane. The protein localises to the host cell surface. It is found in the host membrane. It catalyses the reaction Leu is conserved at position P1 for all four cleavage sites. Alanine is found at position P1' of the NS4A-NS4B cleavage site, whereas serine is found at position P1' of the NS3-NS4A, NS4B-NS5A and NS5A-NS5B cleavage sites.. It carries out the reaction RNA(n) + a ribonucleoside 5'-triphosphate = RNA(n+1) + diphosphate. The enzyme catalyses a ribonucleoside 5'-triphosphate + H2O = a ribonucleoside 5'-diphosphate + phosphate + H(+). The catalysed reaction is ATP + H2O = ADP + phosphate + H(+). Leader cysteine autoprotease that cleaves itself from the nascent polyprotein during translation of the viral mRNA. Once released, plays a role in the inhibition of host innate immune response by interacting with host IRF3 and inducing its proteasomal degradation. Functionally, packages viral RNA to form a viral nucleocapsid and thereby protects viral RNA. Also plays a role in transcription regulation. Protects the incoming virus against IFN-induced effectors. Its function is as follows. Plays a role in viral entry. Interacts with host RPSA that acts as a cellular attachment receptor for the virus. Also possesses intrinsic ribonuclease (RNase) activity that can inhibit the production of type I interferon and assist in the development of persistent infections. Cleaves preferentially NpU bonds. Binds to heparan sulfate on the host cells for entry. In terms of biological role, plays a role in cell attachment and subsequent fusion of viral and cellular membranes. Therefore, mediates together with envelope glycoprotein E2 the viral entry. Plays a role in cell attachment and subsequent fusion of viral and cellular membranes. Therefore, mediates together with envelope glycoprotein E1 the viral entry. Binds to host ADAM17 receptor for entry. Binds to host ANXA2 for entry. Binds to host MERTK for entry. Functionally, plays an essential role in the virus replication cycle by acting as a viroporin. Forms ion conductive pores, which alters the cell permeability allowing the transport of ions and other small molecules. Its function is as follows. Autoprotease that associates with the host chaperone JIV and cleaves the NS2-3 protein between NS2 and NS3. Also plays a role in the formation of infectious particles. In terms of biological role, plays a role in the regulation of viral RNA replication. Multifunctional protein that contains an N-terminal protease and a C-terminal helicase, playing essential roles in viral polyprotein processing and viral genome replication. The chymotrypsin-like serine protease activity utilizes NS4A as an essential cofactor and catalyzes the cleavage of the polyprotein leading to the release of NS4A, NS4B, NS5A, and NS5B. Plays a role in the inhibition of host NF-kappa-B activation by interacting with and inhibiting host TRAF6. Interacts with NS5B to enhance RNA-dependent RNA polymerase activity. Functionally, acts as a cofactor for the NS3 protease activity. Its function is as follows. Induces a specific membrane alteration that serves as a scaffold for the virus replication complex. Antagonizes host cell apoptosis by interacting with host ferritin heavy chain. The ORF4 protein physically binds host FTH1/FHC, resulting in the reduction of FTH1 protein levels in host cells. Reduction of FTH1 concentration further inhibits the accumulation of reactive oxygen in host cells, leading to reduced apoptosis. In terms of biological role, regulates viral RNA replication by interacting with the 3'-untranslated region of viral RNA in a dose-dependent manner. At small concentrations promotes viral synthesis by interacting with the polymerase NS5B while at large concentrations, inhibits replication. Replicates the viral (+) and (-) genome. The chain is Genome polyprotein from Classical swine fever virus (strain Alfort/Tuebingen) (CSFV).